The chain runs to 422 residues: Platelet-activating factor acetylhydrolase (422 aa).

The N-terminal stretch at 1 to 21 is a signal peptide; that stretch reads MASLWVRARRVFMKSRASGFS. Ser266 acts as the Nucleophile in catalysis. Asp289 serves as the catalytic Charge relay system. The N-linked (GlcNAc...) asparagine glycan is linked to Asn331. The Charge relay system role is filled by His345.

This sequence belongs to the AB hydrolase superfamily. Lipase family. In terms of tissue distribution, plasma.

It localises to the secreted. The protein resides in the extracellular space. The enzyme catalyses a 1-O-alkyl-2-acetyl-sn-glycero-3-phosphocholine + H2O = a 1-O-alkyl-sn-glycero-3-phosphocholine + acetate + H(+). Modulates the action of platelet-activating factor (PAF) by hydrolyzing the sn-2 ester bond to yield the biologically inactive lyso-PAF. Has a specificity for substrates with a short residue at the sn-2 position. It is inactive against long-chain phospholipids. This is Platelet-activating factor acetylhydrolase (PLA2G7) from Gallus gallus (Chicken).